The primary structure comprises 630 residues: METTALNSQKAPSVCKDREDCQENSILQKSGPTSAGGVESGQIFNGYSSVPSTGMGDDAEHSVPTATTTLVAEVHHGERETWGKKVDFLLSVIGYAVDLGNIWRFPYVCYQNGGGAFLLPYIIMAIFGGIPLFYMELALGQYHRNGCISIWRKICPIFKGIGYTICIIAFYIASYYNTIIAWALYYLISSFTDRLPWTSCRNSWNTANCTNYFSEDNITWTLHSTSPAEEFYIRHILQIHRSKGLQDVGGVSWQLTLCIMLIFTIIYFSIWKGVKTSGKVVWVTATFPYIVLSVLLVRGATLPGAWKGVLFYLKPNWQKLLETGVWIDAAAQIFFSLGPGFGVLLAFASYNKFNNNCYQDALVTSAVNCMTSFVSGFVIFTVLGYMAEMRSEDVSEVAKDAGPSLLFITYAEAIANMPASTFFAIIFFLMLITLGLDSTFAGLEGVITAVLDEFPHIWAKHREWFVLAVVITCFFGSLTTLTFGGAYVVKLLEEYATGPAVLTVVFIEAIAVSWFYGVTQFCSDVKEMLGFSPGWFWRICWVAVSPVFLLFIICSFLMSPPQLRLFQYSYPHWSVILGYCIGTSSVICIPTYITYRLVTTPGTLKERIIKSITPETPTEIPCGDICLNAV.

The Cytoplasmic portion of the chain corresponds to 1–87; that stretch reads METTALNSQK…ERETWGKKVD (87 aa). A Phosphotyrosine modification is found at Y47. Residues 88-112 form a helical membrane-spanning segment; the sequence is FLLSVIGYAVDLGNIWRFPYVCYQN. Na(+) is bound by residues G94, A96, V97, D98, and N101. D98 is a binding site for serotonin. The Extracellular segment spans residues 113–115; sequence GGG. The helical transmembrane segment at 116–135 threads the bilayer; that stretch reads AFLLPYIIMAIFGGIPLFYM. Residues 136-160 lie on the Cytoplasmic side of the membrane; sequence ELALGQYHRNGCISIWRKICPIFKG. Y142 is subject to Phosphotyrosine. Residues 161–186 traverse the membrane as a helical segment; sequence IGYTICIIAFYIASYYNTIIAWALYY. Residues 187–252 lie on the Extracellular side of the membrane; the sequence is LISSFTDRLP…KGLQDVGGVS (66 aa). C200 and C209 are disulfide-bonded. Residues N208 and N217 are each glycosylated (N-linked (GlcNAc...) asparagine). Residues 253 to 271 form a helical membrane-spanning segment; it reads WQLTLCIMLIFTIIYFSIW. At 272–277 the chain is on the cytoplasmic side; the sequence is KGVKTS. T276 carries the post-translational modification Phosphothreonine. The helical transmembrane segment at 278–297 threads the bilayer; sequence GKVVWVTATFPYIVLSVLLV. The Extracellular segment spans residues 298–324; the sequence is RGATLPGAWKGVLFYLKPNWQKLLETG. The chain crosses the membrane as a helical span at residues 325 to 347; it reads VWIDAAAQIFFSLGPGFGVLLAF. Residue S336 coordinates Na(+). Residues 348 to 360 are Cytoplasmic-facing; sequence ASYNKFNNNCYQD. A helical membrane pass occupies residues 361-380; it reads ALVTSAVNCMTSFVSGFVIF. N368 is a Na(+) binding site. Residues 381-421 are Extracellular-facing; sequence TVLGYMAEMRSEDVSEVAKDAGPSLLFITYAEAIANMPAST. The chain crosses the membrane as a helical span at residues 422–443; that stretch reads FFAIIFFLMLITLGLDSTFAGL. 3 residues coordinate Na(+): L434, D437, and S438. T439 lines the serotonin pocket. At 444-463 the chain is on the cytoplasmic side; that stretch reads EGVITAVLDEFPHIWAKHRE. The helical transmembrane segment at 464-483 threads the bilayer; that stretch reads WFVLAVVITCFFGSLTTLTF. The Extracellular portion of the chain corresponds to 484–494; sequence GGAYVVKLLEE. Serotonin-binding residues include E494 and Y495. A helical transmembrane segment spans residues 495–516; the sequence is YATGPAVLTVVFIEAIAVSWFY. Residues 517–538 lie on the Cytoplasmic side of the membrane; the sequence is GVTQFCSDVKEMLGFSPGWFWR. A helical transmembrane segment spans residues 539 to 558; it reads ICWVAVSPVFLLFIICSFLM. 2 residues coordinate serotonin: F556 and S559. At 559 to 574 the chain is on the extracellular side; that stretch reads SPPQLRLFQYSYPHWS. A helical membrane pass occupies residues 575 to 595; the sequence is VILGYCIGTSSVICIPTYITY. The Cytoplasmic segment spans residues 596-630; the sequence is RLVTTPGTLKERIIKSITPETPTEIPCGDICLNAV. Residues 616 to 624 form an interaction with RAB4A region; sequence TPTEIPCGD.

This sequence belongs to the sodium:neurotransmitter symporter (SNF) (TC 2.A.22) family. SLC6A4 subfamily. Monomer or homooligomer. Interacts (via C-terminus) with SCAMP2; the interaction is direct and retains transporter molecules intracellularly. Interacts with filamentous actin and STX1A. Interacts (via the N-terminus) with STX1A (via the H3 domain); this interaction regulates SLC4A6 channel conductance. Interacts with SEC23A, SEC24C and PATJ. Interacts with NOS1; the interaction may diminish the cell surface localization of SERT in the brain and, correspondingly, reduce serotonin reuptake. Interacts with TGFB1I1. Interacts with ITGAV:ITGB3. Interacts (via C-terminus) with ITGB3; this interaction regulates SLC6A4 trafficking. Post-translationally, phosphorylation at Thr-276 increases 5-HT uptake and is required for cGMP-mediated SERT regulation. As to expression, expressed in the intestinal crypt epithelial cells (at protein level).

It localises to the cell membrane. The protein localises to the endomembrane system. It is found in the endosome membrane. Its subcellular location is the synapse. The protein resides in the cell junction. It localises to the focal adhesion. The protein localises to the cell projection. It is found in the neuron projection. The enzyme catalyses serotonin(out) + K(+)(in) + Na(+)(out) + H(+)(in) = serotonin(in) + K(+)(out) + Na(+)(in) + H(+)(out). Its function is as follows. Serotonin transporter that cotransports serotonin with one Na(+) ion in exchange for one K(+) ion and possibly one proton in an overall electroneutral transport cycle. Transports serotonin across the plasma membrane from the extracellular compartment to the cytosol thus limiting serotonin intercellular signaling. Essential for serotonin homeostasis in the central nervous system. In the developing somatosensory cortex, acts in glutamatergic neurons to control serotonin uptake and its trophic functions accounting for proper spatial organization of cortical neurons and elaboration of sensory circuits. In the mature cortex, acts primarily in brainstem raphe neurons to mediate serotonin uptake from the synaptic cleft back into the pre-synaptic terminal thus terminating serotonin signaling at the synapse. Modulates mucosal serotonin levels in the gastrointestinal tract through uptake and clearance of serotonin in enterocytes. Required for enteric neurogenesis and gastrointestinal reflexes. Regulates blood serotonin levels by ensuring rapid high affinity uptake of serotonin from plasma to platelets, where it is further stored in dense granules via vesicular monoamine transporters and then released upon stimulation. Mechanistically, the transport cycle starts with an outward-open conformation having Na1(+) and Cl(-) sites occupied. The binding of a second extracellular Na2(+) ion and serotonin substrate leads to structural changes to outward-occluded to inward-occluded to inward-open, where the Na2(+) ion and serotonin are released into the cytosol. Binding of intracellular K(+) ion induces conformational transitions to inward-occluded to outward-open and completes the cycle by releasing K(+) possibly together with a proton bound to Asp-98 into the extracellular compartment. Na1(+) and Cl(-) ions remain bound throughout the transport cycle. Additionally, displays serotonin-induced channel-like conductance for monovalent cations, mainly Na(+) ions. The channel activity is uncoupled from the transport cycle and may contribute to the membrane resting potential or excitability. This is Sodium-dependent serotonin transporter (SLC6A4) from Cavia porcellus (Guinea pig).